The chain runs to 289 residues: Trihelix transcription factor GT-3b (289 aa).

Positions 42 to 98 constitute a Myb-like domain; the sequence is WSVEETKELIGIRGELDQTFMETKRNKLLWEVISNKMRDKSFPRSPEQCKCKWKNLV. The short motif at 65-81 is the Bipartite nuclear localization signal element; that stretch reads KRNKLLWEVISNKMRDK. Residues 137–200 are disordered; that stretch reads ESEGGGGGTS…SNSSNSNNGV (64 aa). A compositionally biased stretch (acidic residues) spans 156–168; that stretch reads SDEEEENVNEELV. Residues 179–188 carry the Nuclear localization signal motif; it reads PKKNIAKKRK. Residues 190–199 show a composition bias toward low complexity; the sequence is GSNSSNSNNG. Residues 223–275 adopt a coiled-coil conformation; it reads EAREKERAEKEEEWRRKMEELEKERLAMERMWRDREEQRRSREEMRAEKRDSL.

Heterodimer with GT-3A. Associated with the mediator complex.

It localises to the nucleus. Probable transcription factor that may play a role in the induction of CAM4 in response to pathogen and salt. In Arabidopsis thaliana (Mouse-ear cress), this protein is Trihelix transcription factor GT-3b (GT-3B).